Here is a 136-residue protein sequence, read N- to C-terminus: Large ribosomal subunit protein eL27 (136 aa).

The KOW domain maps to 5–40; that stretch reads MKPGKVVLVLAGRYSGRKAVIVKNIDDGTSDRPYSH. 2 positions are modified to N6-acetyllysine: K27 and K93.

The protein belongs to the eukaryotic ribosomal protein eL27 family. As to quaternary structure, component of the large ribosomal subunit. Interacts with RRP1B. Component of the large ribosomal subunit. Interacts with RRP1B. Interacts with DHX33.

It localises to the cytoplasm. Its subcellular location is the cytosol. The protein resides in the rough endoplasmic reticulum. Its function is as follows. Component of the large ribosomal subunit. Required for proper rRNA processing and maturation of 28S and 5.8S rRNAs. The polypeptide is Large ribosomal subunit protein eL27 (RPL27) (Canis lupus familiaris (Dog)).